The chain runs to 71 residues: Transcription modulator YdgT (71 aa).

It belongs to the Hha/YmoA/Cnu family. In terms of assembly, forms complexes with both H-NS and StpA.

In terms of biological role, binds to H-NS and modified the range of genes it silences; H-NS alonge silences core gene while the H-NS-Hha complex (and presumably also H-NS-YdgT) silences genes acquired by horizontal gene transfer. Plays a role silencing virulence factors in the absence of factors that induce pathogenicity. The complex formed with H-NS binds to the specific 26-bp cnb site in the origin of replication oriC. This is Transcription modulator YdgT (ydgT) from Salmonella choleraesuis (strain SC-B67).